A 78-amino-acid chain; its full sequence is Large ribosomal subunit protein bL28 (78 aa).

It belongs to the bacterial ribosomal protein bL28 family.

The polypeptide is Large ribosomal subunit protein bL28 (Leifsonia xyli subsp. xyli (strain CTCB07)).